The sequence spans 219 residues: Guanylate kinase (219 aa).

The 180-residue stretch at 15–194 (GLMLVISSPS…AFSSVRAIVE (180 aa)) folds into the Guanylate kinase-like domain. 22-29 (SPSGAGKS) contacts ATP.

The protein belongs to the guanylate kinase family.

The protein resides in the cytoplasm. It carries out the reaction GMP + ATP = GDP + ADP. Essential for recycling GMP and indirectly, cGMP. The chain is Guanylate kinase from Rhizobium meliloti (strain 1021) (Ensifer meliloti).